The sequence spans 412 residues: Phosphoglycerate kinase (412 aa).

Substrate-binding positions include 24 to 26 (DLN), Arg40, 63 to 66 (HLGR), Arg122, and Arg162. ATP contacts are provided by residues Lys212, Gly300, Glu331, and 360-363 (GGDS).

The protein belongs to the phosphoglycerate kinase family. Monomer.

The protein resides in the cytoplasm. It catalyses the reaction (2R)-3-phosphoglycerate + ATP = (2R)-3-phospho-glyceroyl phosphate + ADP. The protein operates within carbohydrate degradation; glycolysis; pyruvate from D-glyceraldehyde 3-phosphate: step 2/5. This is Phosphoglycerate kinase (pgk) from Mycobacterium bovis (strain ATCC BAA-935 / AF2122/97).